Here is a 243-residue protein sequence, read N- to C-terminus: UPF0246 protein SpyM3_1790 (243 aa).

It belongs to the UPF0246 family.

In Streptococcus pyogenes serotype M3 (strain ATCC BAA-595 / MGAS315), this protein is UPF0246 protein SpyM3_1790.